The chain runs to 90 residues: uncharacterized protein (90 aa).

An N-terminal signal peptide occupies residues 1–20 (MAYKMLQVVLCSTLLIGALG).

This is an uncharacterized protein from Homo sapiens (Human).